Here is a 342-residue protein sequence, read N- to C-terminus: 29 kDa ribonucleoprotein, chloroplastic (342 aa).

The transit peptide at 1–65 directs the protein to the chloroplast; the sequence is MSASASSLSA…PAEYPSRFVR (65 aa). An RRM 1 domain is found at 99-177; it reads LKLFVGNLSF…RPLRVNAGPP (79 aa). Residues S107 and S204 each carry the phosphoserine modification. A disordered region spans residues 167–255; it reads GRPLRVNAGP…GSGSGSGSGS (89 aa). The interval 178-256 is linker (Gly-rich); sequence PPKREESFSR…SGSGSGSGSG (79 aa). Composition is skewed to gly residues over residues 190–237 and 245–255; these read RSGG…GYGG and SGSGSGSGSGS. The RRM 2 domain occupies 257 to 335; it reads NRLYVGNLSW…RQIRVSEAEA (79 aa).

It is found in the plastid. Its subcellular location is the chloroplast. Stabilizes specific chloroplast mRNAs. Required for normal chloroplast development under cold stress conditions by stabilizing transcripts of numerous mRNAs under these conditions. This is 29 kDa ribonucleoprotein, chloroplastic from Arabidopsis thaliana (Mouse-ear cress).